An 835-amino-acid chain; its full sequence is Replication origin-binding protein (835 aa).

One can recognise a Helicase ATP-binding domain in the interval 54–215; that stretch reads PGMSQTRPVT…SGLRGDENIH (162 aa). 67 to 74 is a binding site for ATP; that stretch reads APMGSGKT.

This sequence belongs to the herpesviridae OriBP family. As to quaternary structure, homodimer. Interacts with the major DNA-binding protein. Interacts with the helicase/primase component 52 and the polymerase accessory protein.

The protein resides in the host nucleus. Functionally, functions as a docking protein to recruit essential components of the viral replication machinery to viral DNA origins. In the presence of the major DNA-binding protein, opens dsDNA leading to a conformational change in the origin that facilitates DNA unwinding and subsequent replication. This Homo sapiens (Human) protein is Replication origin-binding protein.